Here is a 200-residue protein sequence, read N- to C-terminus: Holliday junction branch migration complex subunit RuvA (200 aa).

The segment at Met-1–Ala-64 is domain I. The domain II stretch occupies residues Glu-65–Ile-143. A flexible linker region spans residues Ala-144–Pro-147. A domain III region spans residues Ala-148–Arg-200.

It belongs to the RuvA family. In terms of assembly, homotetramer. Forms an RuvA(8)-RuvB(12)-Holliday junction (HJ) complex. HJ DNA is sandwiched between 2 RuvA tetramers; dsDNA enters through RuvA and exits via RuvB. An RuvB hexamer assembles on each DNA strand where it exits the tetramer. Each RuvB hexamer is contacted by two RuvA subunits (via domain III) on 2 adjacent RuvB subunits; this complex drives branch migration. In the full resolvosome a probable DNA-RuvA(4)-RuvB(12)-RuvC(2) complex forms which resolves the HJ.

The protein localises to the cytoplasm. Its function is as follows. The RuvA-RuvB-RuvC complex processes Holliday junction (HJ) DNA during genetic recombination and DNA repair, while the RuvA-RuvB complex plays an important role in the rescue of blocked DNA replication forks via replication fork reversal (RFR). RuvA specifically binds to HJ cruciform DNA, conferring on it an open structure. The RuvB hexamer acts as an ATP-dependent pump, pulling dsDNA into and through the RuvAB complex. HJ branch migration allows RuvC to scan DNA until it finds its consensus sequence, where it cleaves and resolves the cruciform DNA. This is Holliday junction branch migration complex subunit RuvA from Gluconacetobacter diazotrophicus (strain ATCC 49037 / DSM 5601 / CCUG 37298 / CIP 103539 / LMG 7603 / PAl5).